Consider the following 150-residue polypeptide: Large ribosomal subunit protein bL9 (150 aa).

This sequence belongs to the bacterial ribosomal protein bL9 family.

Functionally, binds to the 23S rRNA. This chain is Large ribosomal subunit protein bL9, found in Corynebacterium aurimucosum (strain ATCC 700975 / DSM 44827 / CIP 107346 / CN-1) (Corynebacterium nigricans).